The primary structure comprises 899 residues: Auxin response factor 25 (899 aa).

The tract at residues 1-20 (MKLSPPASADMPQALPENDG) is disordered. A DNA-binding region (TF-B3) is located at residues 132 to 234 (FCKTLTASDT…QLLLGIRRAN (103 aa)). Over residues 546–564 (RQHVLQEQSSQEMQQQLPS) the composition is skewed to low complexity. The tract at residues 546 to 586 (RQHVLQEQSSQEMQQQLPSSDHHVADVASESGSAPQAQSSL) is disordered. Polar residues predominate over residues 575-586 (ESGSAPQAQSSL). One can recognise a PB1 domain in the interval 766–850 (ATFVKVYKSG…WCIKILSPQE (85 aa)).

This sequence belongs to the ARF family. In terms of assembly, homodimers and heterodimers. As to expression, expressed in roots, culms, leaves and young panicles.

The protein resides in the nucleus. Its function is as follows. Auxin response factors (ARFs) are transcriptional factors that bind specifically to the DNA sequence 5'-TGTCTC-3' found in the auxin-responsive promoter elements (AuxREs). In Oryza sativa subsp. japonica (Rice), this protein is Auxin response factor 25 (ARF25).